Consider the following 87-residue polypeptide: Large ribosomal subunit protein bL27 (87 aa).

The disordered stretch occupies residues 1-21 (MAHKKAGGSSRNGRDSESKRL).

The protein belongs to the bacterial ribosomal protein bL27 family.

In Burkholderia ambifaria (strain MC40-6), this protein is Large ribosomal subunit protein bL27.